A 390-amino-acid chain; its full sequence is Phosphopentomutase (390 aa).

Positions 14, 286, 291, 327, 328, and 339 each coordinate Mn(2+).

The protein belongs to the phosphopentomutase family. The cofactor is Mn(2+).

The protein resides in the cytoplasm. It catalyses the reaction 2-deoxy-alpha-D-ribose 1-phosphate = 2-deoxy-D-ribose 5-phosphate. The catalysed reaction is alpha-D-ribose 1-phosphate = D-ribose 5-phosphate. Its pathway is carbohydrate degradation; 2-deoxy-D-ribose 1-phosphate degradation; D-glyceraldehyde 3-phosphate and acetaldehyde from 2-deoxy-alpha-D-ribose 1-phosphate: step 1/2. In terms of biological role, isomerase that catalyzes the conversion of deoxy-ribose 1-phosphate (dRib-1-P) and ribose 1-phosphate (Rib-1-P) to deoxy-ribose 5-phosphate (dRib-5-P) and ribose 5-phosphate (Rib-5-P), respectively. The sequence is that of Phosphopentomutase from Exiguobacterium sibiricum (strain DSM 17290 / CCUG 55495 / CIP 109462 / JCM 13490 / 255-15).